A 485-amino-acid chain; its full sequence is Pelle-like serine/threonine-protein kinase pik-1 (485 aa).

Residues 115-132 (TSRVSKQMVQPPGSQSAS) are compositionally biased toward polar residues. Residues 115–155 (TSRVSKQMVQPPGSQSASRLKKTEIKESSPSPAAAAASQLS) are disordered. The segment covering 142 to 152 (SSPSPAAAAAS) has biased composition (low complexity). In terms of domain architecture, Protein kinase spans 185-485 (FAVSNVIGKG…LCKNSIPPVV (301 aa)). Residues 191–199 (IGKGGYGTV) and Lys-214 contribute to the ATP site. Catalysis depends on Asp-318, which acts as the Proton acceptor.

The protein belongs to the protein kinase superfamily. TKL Ser/Thr protein kinase family. Pelle subfamily. In terms of assembly, interacts with actl-1. As to expression, expressed in the nervous system.

It carries out the reaction L-seryl-[protein] + ATP = O-phospho-L-seryl-[protein] + ADP + H(+). It catalyses the reaction L-threonyl-[protein] + ATP = O-phospho-L-threonyl-[protein] + ADP + H(+). Its function is as follows. Through association with the adapter actl-1, may act downstream of the receptor complex composed of ilcr-1 and ilcr-2, which is a signaling complex that modulates neuronal activity and animal behavior in response to sensory neuron input. The protein is Pelle-like serine/threonine-protein kinase pik-1 of Caenorhabditis elegans.